The chain runs to 626 residues: ABC transporter G family member 8 (626 aa).

The ABC transporter domain maps to 56 to 300 (VNLDNKTENS…SLGYPCPNNT (245 aa)). 90–97 (GPSGSGKS) is a binding site for ATP. The 249-residue stretch at 373–621 (GNALSRVITA…SLSYFALHFL (249 aa)) folds into the ABC transmembrane type-2 domain. 7 consecutive transmembrane segments (helical) span residues 376-396 (LSRV…FAGL), 409-429 (TLFF…TLFL), 447-467 (FPYF…VTLV), 485-505 (FFFA…FISS), 515-535 (LTFS…GFYV), 543-563 (AFGW…VVIN), and 600-620 (FGVL…ALHF).

This sequence belongs to the ABC transporter superfamily. ABCG family. Eye pigment precursor importer (TC 3.A.1.204) subfamily.

It is found in the membrane. The polypeptide is ABC transporter G family member 8 (abcG8) (Dictyostelium discoideum (Social amoeba)).